The primary structure comprises 321 residues: Beta-porphyranase B (321 aa).

The first 20 residues, 1–20 (MRKTVLYLSAASLFLSSYTL), serve as a signal peptide directing secretion. The GH16 domain occupies 31-319 (EHIKNLPEAP…WVRAYKLVPI (289 aa)). The substrate site is built by Trp72, Arg76, Glu173, Glu178, and Glu284. The Nucleophile role is filled by Glu173. Catalysis depends on Glu178, which acts as the Proton donor.

The protein belongs to the glycosyl hydrolase 16 family.

It catalyses the reaction Hydrolysis of beta-D-galactopyranose-(1-&gt;4)-alpha-L-galactopyranose-6-sulfate linkages in porphyran.. Functionally, cleaves the sulfated polysaccharide porphyran at the (1-&gt;4) linkages between beta-D-galactopyranose and alpha-L-galactopyranose-6-sulfate, forming mostly the disaccharide alpha-L-galactopyranose-6-sulfate-(1-&gt;3)-beta-D-galactose. Some longer oligosaccharides of even number of residues are also observed. Inactive on the non-sulfated agarose portion of the porphyran backbone. This is Beta-porphyranase B from Phocaeicola plebeius (strain DSM 17135 / JCM 12973 / CCUG 54634 / M2) (Bacteroides plebeius).